The chain runs to 570 residues: MRASQIFIPTLKETPAEAELVSHQLLLRGGFIRRLASGLYTWMPLGLRVLRKVERVVREEMDRSGAQELLMPVVQPAELWQESGRWEQYGPELLRLRDRHDREFCLGPTHEEVISDLARREIHSYRQLPVNFYQIQTKFRDEIRPRFGLMRGREFIMKDAYSFHMDHSSLEITYQAMYEAYQRVFTRLGLSFRAVEADNGAIGGKRSHEFHVLADSGEDAIVSCHHCDYAANMEKAASRPDLAETEIPLAAERVRTPGIRTVAEQAEHLGIPTAKIVKTVLVVADGKTVMLLLRGDDELNLVKAGHALNAQDVQMARPEEAISATGAPLGFIGPKEPLLSIPILADHRALGVANFSTGANAADLHWINLNWDRDLPRPAAADLRNVRAGDACPHCAEGTLSIRRGIEVGHVFQLGERYSESMGITVLDETGRDATVTMGCYGIGVSRVVAAAVEQHFDDRGIIWPVALAPFEVGIVAINARKSPDVAAAAQALHDRLEAEGYSVLLDDRDERPGVQFATMDLVGLPHRIVVSDTVLAQGVWEYRARRTTENVLLDETQLMERLRKEHARG.

The protein belongs to the class-II aminoacyl-tRNA synthetase family. ProS type 1 subfamily. In terms of assembly, homodimer.

The protein localises to the cytoplasm. The catalysed reaction is tRNA(Pro) + L-proline + ATP = L-prolyl-tRNA(Pro) + AMP + diphosphate. Catalyzes the attachment of proline to tRNA(Pro) in a two-step reaction: proline is first activated by ATP to form Pro-AMP and then transferred to the acceptor end of tRNA(Pro). As ProRS can inadvertently accommodate and process non-cognate amino acids such as alanine and cysteine, to avoid such errors it has two additional distinct editing activities against alanine. One activity is designated as 'pretransfer' editing and involves the tRNA(Pro)-independent hydrolysis of activated Ala-AMP. The other activity is designated 'posttransfer' editing and involves deacylation of mischarged Ala-tRNA(Pro). The misacylated Cys-tRNA(Pro) is not edited by ProRS. This Acidithiobacillus ferrooxidans (strain ATCC 23270 / DSM 14882 / CIP 104768 / NCIMB 8455) (Ferrobacillus ferrooxidans (strain ATCC 23270)) protein is Proline--tRNA ligase.